Reading from the N-terminus, the 858-residue chain is Protein translocase subunit SecA (858 aa).

Residues Gln85, 103–107 (GEGKT), and Asp511 each bind ATP. Zn(2+) contacts are provided by Cys840, Cys842, Cys851, and Cys852.

The protein belongs to the SecA family. In terms of assembly, monomer and homodimer. Part of the essential Sec protein translocation apparatus which comprises SecA, SecYEG and auxiliary proteins SecDF. Other proteins may also be involved. Requires Zn(2+) as cofactor.

It localises to the cell membrane. Its subcellular location is the cytoplasm. The enzyme catalyses ATP + H2O + cellular proteinSide 1 = ADP + phosphate + cellular proteinSide 2.. Its function is as follows. Part of the Sec protein translocase complex. Interacts with the SecYEG preprotein conducting channel. Has a central role in coupling the hydrolysis of ATP to the transfer of proteins into and across the cell membrane, serving as an ATP-driven molecular motor driving the stepwise translocation of polypeptide chains across the membrane. In Lachnoclostridium phytofermentans (strain ATCC 700394 / DSM 18823 / ISDg) (Clostridium phytofermentans), this protein is Protein translocase subunit SecA.